The following is a 331-amino-acid chain: Aspartate carbamoyltransferase catalytic subunit (331 aa).

Positions 66 and 67 each coordinate carbamoyl phosphate. K94 contacts L-aspartate. R116, H149, and Q152 together coordinate carbamoyl phosphate. R189 and R243 together coordinate L-aspartate. Positions 284 and 285 each coordinate carbamoyl phosphate.

This sequence belongs to the aspartate/ornithine carbamoyltransferase superfamily. ATCase family. In terms of assembly, heterododecamer (2C3:3R2) of six catalytic PyrB chains organized as two trimers (C3), and six regulatory PyrI chains organized as three dimers (R2).

The catalysed reaction is carbamoyl phosphate + L-aspartate = N-carbamoyl-L-aspartate + phosphate + H(+). Its pathway is pyrimidine metabolism; UMP biosynthesis via de novo pathway; (S)-dihydroorotate from bicarbonate: step 2/3. Its function is as follows. Catalyzes the condensation of carbamoyl phosphate and aspartate to form carbamoyl aspartate and inorganic phosphate, the committed step in the de novo pyrimidine nucleotide biosynthesis pathway. This Thermosynechococcus vestitus (strain NIES-2133 / IAM M-273 / BP-1) protein is Aspartate carbamoyltransferase catalytic subunit.